A 180-amino-acid polypeptide reads, in one-letter code: Large ribosomal subunit protein uL5 (180 aa).

It belongs to the universal ribosomal protein uL5 family. In terms of assembly, part of the 50S ribosomal subunit; part of the 5S rRNA/L5/L18/L25 subcomplex. Contacts the 5S rRNA and the P site tRNA. Forms a bridge to the 30S subunit in the 70S ribosome.

In terms of biological role, this is one of the proteins that bind and probably mediate the attachment of the 5S RNA into the large ribosomal subunit, where it forms part of the central protuberance. In the 70S ribosome it contacts protein S13 of the 30S subunit (bridge B1b), connecting the 2 subunits; this bridge is implicated in subunit movement. Contacts the P site tRNA; the 5S rRNA and some of its associated proteins might help stabilize positioning of ribosome-bound tRNAs. In Limosilactobacillus fermentum (strain NBRC 3956 / LMG 18251) (Lactobacillus fermentum), this protein is Large ribosomal subunit protein uL5.